Here is a 326-residue protein sequence, read N- to C-terminus: Glycerol-3-phosphate dehydrogenase [NAD(P)+] (326 aa).

Residues Trp15, Arg35, and Lys107 each coordinate NADPH. The sn-glycerol 3-phosphate site is built by Lys107, Gly135, and Ser137. NADPH is bound at residue Ala139. 5 residues coordinate sn-glycerol 3-phosphate: Lys190, Asp243, Ser253, Arg254, and Asn255. The active-site Proton acceptor is Lys190. Arg254 contacts NADPH. NADPH is bound by residues Leu273 and Glu275.

It belongs to the NAD-dependent glycerol-3-phosphate dehydrogenase family.

It localises to the cytoplasm. It catalyses the reaction sn-glycerol 3-phosphate + NAD(+) = dihydroxyacetone phosphate + NADH + H(+). The enzyme catalyses sn-glycerol 3-phosphate + NADP(+) = dihydroxyacetone phosphate + NADPH + H(+). It participates in membrane lipid metabolism; glycerophospholipid metabolism. Its function is as follows. Catalyzes the reduction of the glycolytic intermediate dihydroxyacetone phosphate (DHAP) to sn-glycerol 3-phosphate (G3P), the key precursor for phospholipid synthesis. The protein is Glycerol-3-phosphate dehydrogenase [NAD(P)+] of Bradyrhizobium diazoefficiens (strain JCM 10833 / BCRC 13528 / IAM 13628 / NBRC 14792 / USDA 110).